The primary structure comprises 428 residues: 3-phosphoshikimate 1-carboxyvinyltransferase (428 aa).

Residues Lys23, Ser24, and Arg28 each contribute to the 3-phosphoshikimate site. Lys23 is a binding site for phosphoenolpyruvate. 2 residues coordinate phosphoenolpyruvate: Gly97 and Arg125. The 3-phosphoshikimate site is built by Ser170, Ser171, Gln172, Ser198, Asp314, Asn337, and Lys341. Residue Gln172 coordinates phosphoenolpyruvate. Asp314 functions as the Proton acceptor in the catalytic mechanism. 3 residues coordinate phosphoenolpyruvate: Arg345, Arg387, and Lys412.

It belongs to the EPSP synthase family. In terms of assembly, monomer.

It localises to the cytoplasm. It catalyses the reaction 3-phosphoshikimate + phosphoenolpyruvate = 5-O-(1-carboxyvinyl)-3-phosphoshikimate + phosphate. It functions in the pathway metabolic intermediate biosynthesis; chorismate biosynthesis; chorismate from D-erythrose 4-phosphate and phosphoenolpyruvate: step 6/7. Functionally, catalyzes the transfer of the enolpyruvyl moiety of phosphoenolpyruvate (PEP) to the 5-hydroxyl of shikimate-3-phosphate (S3P) to produce enolpyruvyl shikimate-3-phosphate and inorganic phosphate. This chain is 3-phosphoshikimate 1-carboxyvinyltransferase, found in Yersinia pestis bv. Antiqua (strain Antiqua).